The primary structure comprises 343 residues: Fructose-1,6-bisphosphatase class 1 (343 aa).

Positions 91, 113, 115, and 116 each coordinate Mg(2+). Residues 116 to 119, Asn210, and Lys276 contribute to the substrate site; that span reads DGSS. Glu282 serves as a coordination point for Mg(2+).

Belongs to the FBPase class 1 family. In terms of assembly, homotetramer. The cofactor is Mg(2+).

Its subcellular location is the cytoplasm. The enzyme catalyses beta-D-fructose 1,6-bisphosphate + H2O = beta-D-fructose 6-phosphate + phosphate. It functions in the pathway carbohydrate biosynthesis; gluconeogenesis. This Parvibaculum lavamentivorans (strain DS-1 / DSM 13023 / NCIMB 13966) protein is Fructose-1,6-bisphosphatase class 1.